We begin with the raw amino-acid sequence, 119 residues long: Large ribosomal subunit protein uL22 (119 aa).

This sequence belongs to the universal ribosomal protein uL22 family. As to quaternary structure, part of the 50S ribosomal subunit.

This protein binds specifically to 23S rRNA; its binding is stimulated by other ribosomal proteins, e.g. L4, L17, and L20. It is important during the early stages of 50S assembly. It makes multiple contacts with different domains of the 23S rRNA in the assembled 50S subunit and ribosome. In terms of biological role, the globular domain of the protein is located near the polypeptide exit tunnel on the outside of the subunit, while an extended beta-hairpin is found that lines the wall of the exit tunnel in the center of the 70S ribosome. The sequence is that of Large ribosomal subunit protein uL22 from Rickettsia peacockii (strain Rustic).